The following is a 342-amino-acid chain: Probable transposase for insertion-like sequence element IS1161 (342 aa).

Residues 182–342 form the Integrase catalytic domain; it reads IEERPEEINN…KKLFELTQTA (161 aa).

It belongs to the transposase IS30 family.

Its function is as follows. Required for the transposition of the insertion element. This chain is Probable transposase for insertion-like sequence element IS1161, found in Streptococcus salivarius.